We begin with the raw amino-acid sequence, 1401 residues long: Lysine-specific demethylase 6A (1401 aa).

The interval 1-1095 (MKSCGVSLAT…TNIDLSDDKK (1095 aa)) is interaction with SUPT6H. 8 TPR repeats span residues 95–128 (SDFFCQLGHFNLLLEDYPKALSAYQRYYSLQSDY), 132–165 (AAFLYGLGLVYFHYNAFQWAIKAFQEVLYVDPSF), 169–203 (KEIHLRLGLMFKVNTDYESSLKHFQLALVDCNPCT), 207–240 (AEIQFHIAHLYETQRKYHSAKEAYEQLLQTENLS), 245–285 (ATIL…DPNS), 286–319 (GQSWYFLGRCYSSIGKVQDAFISYRQSIDKSEAS), 321–353 (DTWCSIGVLYQQQNQPMDALQAYICAVQLDHGH), and 355–387 (AAWMDLGTLYESCNQPQDAIKCYLNATRSKNCS). A compositionally biased stretch (polar residues) spans 439–453 (AMNTAQQNTSDNWSG). The tract at residues 439-463 (AMNTAQQNTSDNWSGGNAPPPVEQQ) is disordered. Residues arginine 519 and arginine 549 each carry the omega-N-methylarginine modification. Polar residues-rich tracts occupy residues 596 to 606 (NHVTGSGSNGN), 619 to 642 (HNRTNLTSSTEEPWKNQLSNSTQG), and 660 to 743 (LSST…STAS). Residues 596–745 (NHVTGSGSNG…ETPNSTASVE (150 aa)) are disordered. Serine 769 is modified (phosphoserine). Disordered stretches follow at residues 795–863 (GTCD…EESQ), 914–941 (LLDKCPPPRPPSSPYPPLPKDKLNPPTP), and 1043–1080 (FQESLREENEKRSHHKDHSDSESTSSDNSGKRRKGPFK). Residues 814–833 (SVASSPSSAISTATPSPKST) are compositionally biased toward low complexity. The residue at position 827 (threonine 827) is a Phosphothreonine. At serine 829 the chain carries Phosphoserine. Residues 834–848 (EQTTTNSVTSLNSPH) show a composition bias toward polar residues. A compositionally biased stretch (pro residues) spans 918-931 (CPPPRPPSSPYPPL). The segment covering 1046 to 1063 (SLREENEKRSHHKDHSDS) has biased composition (basic and acidic residues). The JmjC domain maps to 1095-1258 (KWKLQLHELT…YKLAVERYEW (164 aa)). Fe cation is bound by residues histidine 1146, glutamate 1148, and histidine 1226. Zn(2+) is bound by residues cysteine 1331, cysteine 1334, cysteine 1358, and cysteine 1361.

The protein belongs to the UTX family. As to quaternary structure, component of the MLL2/3 complex (also named ASCOM complex), at least composed of KMT2D/MLL2 or KMT2C/MLL3, ASH2L, RBBP5, WDR5, NCOA6, DPY30, KDM6A (or KDM6B), PAXIP1/PTIP, PAGR1 and alpha- and beta-tubulin. Interacts with TLE1. Interacts with SUPT6H. Interacts with SMARCA4. Interacts with PROSER1. Requires L-ascorbate as cofactor. It depends on Fe(2+) as a cofactor. In terms of tissue distribution, expressed in brain, heart and spleen.

The protein localises to the nucleus. The enzyme catalyses N(6),N(6),N(6)-trimethyl-L-lysyl(27)-[histone H3] + 2 2-oxoglutarate + 2 O2 = N(6)-methyl-L-lysyl(27)-[histone H3] + 2 formaldehyde + 2 succinate + 2 CO2. Its function is as follows. Histone demethylase that specifically demethylates 'Lys-27' of histone H3, thereby playing a central role in histone code. Demethylates trimethylated and dimethylated but not monomethylated H3 'Lys-27'. Plays a central role in regulation of posterior development, by regulating HOX gene expression. Demethylation of 'Lys-27' of histone H3 is concomitant with methylation of 'Lys-4' of histone H3, and regulates the recruitment of the PRC1 complex and monoubiquitination of histone H2A. Plays a demethylase-independent role in chromatin remodeling to regulate T-box family member-dependent gene expression. This is Lysine-specific demethylase 6A (Kdm6a) from Mus musculus (Mouse).